The sequence spans 397 residues: Succinate--CoA ligase [ADP-forming] subunit beta (397 aa).

The 246-residue stretch at 9–254 (KALLKGYGAP…ETEEDAKEIE (246 aa)) folds into the ATP-grasp domain. ATP is bound by residues Lys-46, 53–55 (GRG), Glu-109, Ala-112, and Glu-117. Mg(2+) is bound by residues Asn-209 and Asp-223. Substrate-binding positions include Asn-274 and 331-333 (GIM).

The protein belongs to the succinate/malate CoA ligase beta subunit family. Heterotetramer of two alpha and two beta subunits. Mg(2+) serves as cofactor.

It catalyses the reaction succinate + ATP + CoA = succinyl-CoA + ADP + phosphate. The catalysed reaction is GTP + succinate + CoA = succinyl-CoA + GDP + phosphate. The protein operates within carbohydrate metabolism; tricarboxylic acid cycle; succinate from succinyl-CoA (ligase route): step 1/1. Its function is as follows. Succinyl-CoA synthetase functions in the citric acid cycle (TCA), coupling the hydrolysis of succinyl-CoA to the synthesis of either ATP or GTP and thus represents the only step of substrate-level phosphorylation in the TCA. The beta subunit provides nucleotide specificity of the enzyme and binds the substrate succinate, while the binding sites for coenzyme A and phosphate are found in the alpha subunit. This is Succinate--CoA ligase [ADP-forming] subunit beta from Rhizobium etli (strain ATCC 51251 / DSM 11541 / JCM 21823 / NBRC 15573 / CFN 42).